The chain runs to 119 residues: Large ribosomal subunit protein bL20 (119 aa).

It belongs to the bacterial ribosomal protein bL20 family.

Its function is as follows. Binds directly to 23S ribosomal RNA and is necessary for the in vitro assembly process of the 50S ribosomal subunit. It is not involved in the protein synthesizing functions of that subunit. The sequence is that of Large ribosomal subunit protein bL20 from Stenotrophomonas maltophilia (strain K279a).